Here is an 80-residue protein sequence, read N- to C-terminus: Defensin-like protein 1 (80 aa).

The signal sequence occupies residues 1–29; it reads MAKFASIIALLFAALVLFAAFEAPTMVEA. Glutamine 30 carries the pyrrolidone carboxylic acid modification. Cystine bridges form between cysteine 33–cysteine 80, cysteine 44–cysteine 65, cysteine 50–cysteine 74, and cysteine 54–cysteine 76.

This sequence belongs to the DEFL family. In terms of assembly, forms oligomers in its native state.

The protein localises to the secreted. Functionally, possesses antifungal activity sensitive to inorganic cations. This chain is Defensin-like protein 1 (AFP1), found in Raphanus sativus (Radish).